Consider the following 473-residue polypeptide: Photosystem II CP43 reaction center protein (473 aa).

Residues 1–14 constitute a propeptide that is removed on maturation; that stretch reads MKTLYSLRRFYHVE. Thr-15 bears the N-acetylthreonine mark. Residue Thr-15 is modified to Phosphothreonine. A run of 5 helical transmembrane segments spans residues 69-93, 134-155, 178-200, 255-275, and 291-312; these read LFEVAHYIPEKPLYEQGLILLPHLA, LIGPDTLEESFPAFGYDWRDKN, KAIYVGGLYDTWAPGGGDVRIID, KPFAWARRAYVWSGEAYLSYS, and WYNNTVYPSEFYGPTGPEASQS. Position 367 (Glu-367) interacts with [CaMn4O5] cluster. A helical transmembrane segment spans residues 447 to 471; it reads RARAAAAGFEKGINRENEPVLTLRP.

This sequence belongs to the PsbB/PsbC family. PsbC subfamily. In terms of assembly, PSII is composed of 1 copy each of membrane proteins PsbA, PsbB, PsbC, PsbD, PsbE, PsbF, PsbH, PsbI, PsbJ, PsbK, PsbL, PsbM, PsbT, PsbX, PsbY, PsbZ, Psb30/Ycf12, at least 3 peripheral proteins of the oxygen-evolving complex and a large number of cofactors. It forms dimeric complexes. It depends on Binds multiple chlorophylls and provides some of the ligands for the Ca-4Mn-5O cluster of the oxygen-evolving complex. It may also provide a ligand for a Cl- that is required for oxygen evolution. PSII binds additional chlorophylls, carotenoids and specific lipids. as a cofactor.

The protein resides in the plastid. It is found in the chloroplast thylakoid membrane. Functionally, one of the components of the core complex of photosystem II (PSII). It binds chlorophyll and helps catalyze the primary light-induced photochemical processes of PSII. PSII is a light-driven water:plastoquinone oxidoreductase, using light energy to abstract electrons from H(2)O, generating O(2) and a proton gradient subsequently used for ATP formation. This is Photosystem II CP43 reaction center protein from Guillardia theta (Cryptophyte).